An 86-amino-acid chain; its full sequence is MDPYKVIIRPVVTEKAISLIEKENKLTFIVDRRATKQDIKRAVEEIFNVKVEKVNTLITPRGEKKAYVKLKPEYSASEVAARLGLF.

The protein belongs to the universal ribosomal protein uL23 family. As to quaternary structure, part of the 50S ribosomal subunit. Contacts protein L29.

Its function is as follows. Binds to 23S rRNA. One of the proteins that surrounds the polypeptide exit tunnel on the outside of the ribosome. This is Large ribosomal subunit protein uL23 from Pyrococcus furiosus (strain ATCC 43587 / DSM 3638 / JCM 8422 / Vc1).